Reading from the N-terminus, the 3373-residue chain is Intermembrane lipid transfer protein vps13A (3373 aa).

In terms of domain architecture, Chorein N-terminal spans 3-119 (FEGLVSDVLS…QAELKKKKLE (117 aa)). 5 disordered regions span residues 818–858 (PKAT…VNSS), 1028–1096 (VPIN…KTAS), 1259–1304 (NNNK…DLEK), 1648–1729 (DPSI…EEEK), and 1872–1913 (QKKR…GKKD). Residues 823–839 (TPINDSNSPSSVSPKLI) show a composition bias toward polar residues. Composition is skewed to low complexity over residues 840–858 (STSPHSFSSSSAPVDVNSS) and 1048–1066 (SSPNQQSPNQQSPNQQSPQ). Composition is skewed to basic and acidic residues over residues 1263-1274 (SIEKSKSIDSKL) and 1288-1304 (RSDDNHEKSERELDLEK). Low complexity-rich tracts occupy residues 1659 to 1685 (QQQQQQSSSSSFIPSQQQQQQKVRSQS), 1695 to 1716 (SSIGGKESKTISSSISNNSLSS), and 1884 to 1898 (SSSTSLPSLNKSTNS). Residues 1899-1909 (FQTSTSGNSNS) are compositionally biased toward polar residues. Residues 2405–2706 (TLSFYCQYWL…CYGWDEPSAE (302 aa)) enclose the SHR-BD domain. The interval 2909–2933 (RGNNASNNNNNNGMTSSQMRQSGSG) is disordered. The span at 2911-2920 (NNASNNNNNN) shows a compositional bias: low complexity.

It belongs to the VPS13 family.

It localises to the membrane. Its function is as follows. Mediates the transfer of lipids between membranes at organelle contact sites. This Dictyostelium discoideum (Social amoeba) protein is Intermembrane lipid transfer protein vps13A (vps13A).